Here is a 321-residue protein sequence, read N- to C-terminus: Ferredoxin--NADP reductase (321 aa).

FAD is bound by residues Glu-33, Gln-41, Tyr-46, Val-86, Leu-119, Asp-277, and Ser-318.

This sequence belongs to the ferredoxin--NADP reductase type 2 family. As to quaternary structure, homodimer. FAD serves as cofactor.

The enzyme catalyses 2 reduced [2Fe-2S]-[ferredoxin] + NADP(+) + H(+) = 2 oxidized [2Fe-2S]-[ferredoxin] + NADPH. This is Ferredoxin--NADP reductase from Lactococcus lactis subsp. lactis (strain IL1403) (Streptococcus lactis).